A 273-amino-acid chain; its full sequence is Dermonecrotic toxin LapSicTox-alphaIB1aii (273 aa).

The active site involves His5. Positions 25 and 27 each coordinate Mg(2+). The Nucleophile role is filled by His41. Intrachain disulfides connect Cys45–Cys51 and Cys47–Cys190. A Mg(2+)-binding site is contributed by Asp85. The N-linked (GlcNAc...) asparagine glycan is linked to Asn250.

Belongs to the arthropod phospholipase D family. Class II subfamily. It depends on Mg(2+) as a cofactor. As to expression, expressed by the venom gland.

The protein localises to the secreted. It catalyses the reaction an N-(acyl)-sphingosylphosphocholine = an N-(acyl)-sphingosyl-1,3-cyclic phosphate + choline. The catalysed reaction is an N-(acyl)-sphingosylphosphoethanolamine = an N-(acyl)-sphingosyl-1,3-cyclic phosphate + ethanolamine. It carries out the reaction a 1-acyl-sn-glycero-3-phosphocholine = a 1-acyl-sn-glycero-2,3-cyclic phosphate + choline. The enzyme catalyses a 1-acyl-sn-glycero-3-phosphoethanolamine = a 1-acyl-sn-glycero-2,3-cyclic phosphate + ethanolamine. Dermonecrotic toxins cleave the phosphodiester linkage between the phosphate and headgroup of certain phospholipids (sphingolipid and lysolipid substrates), forming an alcohol (often choline) and a cyclic phosphate. This toxin acts on sphingomyelin (SM). It may also act on ceramide phosphoethanolamine (CPE), lysophosphatidylcholine (LPC) and lysophosphatidylethanolamine (LPE), but not on lysophosphatidylserine (LPS), and lysophosphatidylglycerol (LPG). It acts by transphosphatidylation, releasing exclusively cyclic phosphate products as second products. Induces dermonecrosis, hemolysis, increased vascular permeability, edema, inflammatory response, and platelet aggregation. The polypeptide is Dermonecrotic toxin LapSicTox-alphaIB1aii (Loxosceles apachea (Apache recluse spider)).